The sequence spans 131 residues: Small ribosomal subunit protein uS11 (131 aa).

Belongs to the universal ribosomal protein uS11 family. In terms of assembly, part of the 30S ribosomal subunit. Interacts with proteins S7 and S18. Binds to IF-3.

Functionally, located on the platform of the 30S subunit, it bridges several disparate RNA helices of the 16S rRNA. Forms part of the Shine-Dalgarno cleft in the 70S ribosome. This is Small ribosomal subunit protein uS11 from Trichormus variabilis (strain ATCC 29413 / PCC 7937) (Anabaena variabilis).